The sequence spans 688 residues: Translation initiation factor IF-2 (688 aa).

Basic and acidic residues-rich tracts occupy residues 53 to 62 (GKEKSEKTKE) and 86 to 95 (KRDDKNEKVN). The interval 53–100 (GKEKSEKTKEEDDEIETTAKNPIKESMNNKKSNKRDDKNEKVNTENAE) is disordered. The 168-residue stretch at 187–354 (KRSPIITVMG…MILLSSEILE (168 aa)) folds into the tr-type G domain. The interval 196–203 (GHVDHGKT) is G1. 196-203 (GHVDHGKT) contributes to the GTP binding site. The G2 stretch occupies residues 221–225 (GITQH). The segment at 242 to 245 (DTPG) is G3. Residues 242 to 246 (DTPGH) and 296 to 299 (NKID) contribute to the GTP site. Residues 296-299 (NKID) are G4. A G5 region spans residues 332 to 334 (SAH).

This sequence belongs to the TRAFAC class translation factor GTPase superfamily. Classic translation factor GTPase family. IF-2 subfamily.

Its subcellular location is the cytoplasm. Functionally, one of the essential components for the initiation of protein synthesis. Protects formylmethionyl-tRNA from spontaneous hydrolysis and promotes its binding to the 30S ribosomal subunits. Also involved in the hydrolysis of GTP during the formation of the 70S ribosomal complex. This is Translation initiation factor IF-2 from Clostridium botulinum (strain ATCC 19397 / Type A).